The chain runs to 405 residues: Aspartokinase (405 aa).

7 to 10 (KYGG) contributes to the ATP binding site. Residue 25-30 (RIAHYR) participates in substrate binding. Residue Ser-41 participates in ATP binding. Substrate contacts are provided by residues 47 to 49 (TDE), Glu-74, 125 to 126 (LD), 150 to 153 (RGGS), and Ser-153. ATP is bound by residues 173–174 (TD), 179–184 (YTTDPH), and Arg-209. ACT domains are found at residues 263 to 342 (IGLI…IAKV) and 344 to 405 (IVGV…LDKA). Substrate is bound by residues Asp-270, 274–275 (IA), 288–290 (AVD), Gln-294, 355–356 (VP), 369–370 (NI), and 376–377 (SE).

This sequence belongs to the aspartokinase family. Heterotetramer consisting of 2 isoforms Alpha (catalytic and regulation) and of a homodimer of 2 isoforms Beta (regulation and thermostability).

It catalyses the reaction L-aspartate + ATP = 4-phospho-L-aspartate + ADP. It participates in amino-acid biosynthesis; L-lysine biosynthesis via DAP pathway; (S)-tetrahydrodipicolinate from L-aspartate: step 1/4. It functions in the pathway amino-acid biosynthesis; L-methionine biosynthesis via de novo pathway; L-homoserine from L-aspartate: step 1/3. Its pathway is amino-acid biosynthesis; L-threonine biosynthesis; L-threonine from L-aspartate: step 1/5. With respect to regulation, inhibited by threonine. Catalyzes the phosphorylation of the beta-carboxyl group of aspartic acid with ATP to yield 4-phospho-L-aspartate, which is involved in the branched biosynthetic pathway leading to the biosynthesis of amino acids threonine, isoleucine and methionine. The sequence is that of Aspartokinase (ask) from Thermus thermophilus.